Here is a 322-residue protein sequence, read N- to C-terminus: Phosphatidylserine decarboxylase proenzyme (322 aa).

Active-site charge relay system; for autoendoproteolytic cleavage activity residues include aspartate 90, histidine 147, and serine 254. Serine 254 (schiff-base intermediate with substrate; via pyruvic acid; for decarboxylase activity) is an active-site residue. Residue serine 254 is modified to Pyruvic acid (Ser); by autocatalysis. The tract at residues 297 to 322 (PAPLPAEEIKAEHDASPLVDNKKDDT) is disordered. A compositionally biased stretch (basic and acidic residues) spans 303 to 322 (EEIKAEHDASPLVDNKKDDT).

Belongs to the phosphatidylserine decarboxylase family. PSD-B subfamily. Prokaryotic type I sub-subfamily. Heterodimer of a large membrane-associated beta subunit and a small pyruvoyl-containing alpha subunit. It depends on pyruvate as a cofactor. Post-translationally, is synthesized initially as an inactive proenzyme. Formation of the active enzyme involves a self-maturation process in which the active site pyruvoyl group is generated from an internal serine residue via an autocatalytic post-translational modification. Two non-identical subunits are generated from the proenzyme in this reaction, and the pyruvate is formed at the N-terminus of the alpha chain, which is derived from the carboxyl end of the proenzyme. The autoendoproteolytic cleavage occurs by a canonical serine protease mechanism, in which the side chain hydroxyl group of the serine supplies its oxygen atom to form the C-terminus of the beta chain, while the remainder of the serine residue undergoes an oxidative deamination to produce ammonia and the pyruvoyl prosthetic group on the alpha chain. During this reaction, the Ser that is part of the protease active site of the proenzyme becomes the pyruvoyl prosthetic group, which constitutes an essential element of the active site of the mature decarboxylase.

It localises to the cell membrane. It carries out the reaction a 1,2-diacyl-sn-glycero-3-phospho-L-serine + H(+) = a 1,2-diacyl-sn-glycero-3-phosphoethanolamine + CO2. It participates in phospholipid metabolism; phosphatidylethanolamine biosynthesis; phosphatidylethanolamine from CDP-diacylglycerol: step 2/2. Catalyzes the formation of phosphatidylethanolamine (PtdEtn) from phosphatidylserine (PtdSer). The protein is Phosphatidylserine decarboxylase proenzyme of Salmonella typhi.